The chain runs to 579 residues: Proteasome-associated ATPase (579 aa).

The disordered stretch occupies residues 1–21 (MPRDETPEREHAEQQSRQALE). Positions 8 to 86 (EREHAEQQSR…REEVEKLTQP (79 aa)) form a coiled coil. 268-273 (GCGKTL) lines the ATP pocket. A docks into pockets in the proteasome alpha-ring region spans residues 578–579 (YL).

This sequence belongs to the AAA ATPase family. As to quaternary structure, homohexamer. Assembles into a hexameric ring structure that caps the 20S proteasome core. Strongly interacts with the prokaryotic ubiquitin-like protein Pup through a hydrophobic interface; the interacting region of ARC lies in its N-terminal coiled-coil domain. There is one Pup binding site per ARC hexamer ring. Upon ATP-binding, the C-terminus of ARC interacts with the alpha-rings of the proteasome core, possibly by binding to the intersubunit pockets.

Its pathway is protein degradation; proteasomal Pup-dependent pathway. Its function is as follows. ATPase which is responsible for recognizing, binding, unfolding and translocation of pupylated proteins into the bacterial 20S proteasome core particle. May be essential for opening the gate of the 20S proteasome via an interaction with its C-terminus, thereby allowing substrate entry and access to the site of proteolysis. Thus, the C-termini of the proteasomal ATPase may function like a 'key in a lock' to induce gate opening and therefore regulate proteolysis. The sequence is that of Proteasome-associated ATPase from Acidimicrobium ferrooxidans (strain DSM 10331 / JCM 15462 / NBRC 103882 / ICP).